The sequence spans 187 residues: Corticoliberin (187 aa).

An N-terminal signal peptide occupies residues 1–24; that stretch reads MRLRLLVSAGMLLVALSPCLPCRA. The propeptide occupies 25–144; that stretch reads LLSRGSVSGA…HQGALERERR (120 aa). The tract at residues 75 to 95 is disordered; the sequence is AARLSPNSTPLTAGRGSRPSH. Isoleucine amide is present on isoleucine 185.

The protein belongs to the sauvagine/corticotropin-releasing factor/urotensin I family. As to quaternary structure, interacts (via C-terminus) with CRFR1 (via N-terminal extracellular domain). In terms of tissue distribution, produced by the hypothalamus.

It localises to the secreted. Its function is as follows. Hormone regulating the release of corticotropin from pituitary gland. Induces NLRP6 in intestinal epithelial cells, hence may influence gut microbiota profile. The protein is Corticoliberin (Crh) of Rattus norvegicus (Rat).